The primary structure comprises 315 residues: Uracil-DNA glycosylase (315 aa).

The segment covering 35–80 (AAAAAPAGAGAGASKPARPPAAARPAKGTPAASAATTATGADASAP) has biased composition (low complexity). Residues 35–88 (AAAAAPAGAGAGASKPARPPAAARPAKGTPAASAATTATGADASAPAPDPGAPT) form a disordered region. Catalysis depends on aspartate 158, which acts as the Proton acceptor.

The protein belongs to the uracil-DNA glycosylase (UDG) superfamily. UNG family.

It localises to the host nucleus. It catalyses the reaction Hydrolyzes single-stranded DNA or mismatched double-stranded DNA and polynucleotides, releasing free uracil.. Excises uracil residues from the DNA which can arise as a result of misincorporation of dUMP residues by DNA polymerase or deamination of cytosines. Therefore may reduce deleterious uracil incorporation into the viral genome, particularly in terminally differentiated cells which lack DNA repair enzymes. This chain is Uracil-DNA glycosylase (UL2), found in Suid herpesvirus 1 (strain Indiana-Funkhauser / Becker) (SuHV-1).